Consider the following 142-residue polypeptide: Large ribosomal subunit protein uL13 (142 aa).

It belongs to the universal ribosomal protein uL13 family. As to quaternary structure, part of the 50S ribosomal subunit.

Functionally, this protein is one of the early assembly proteins of the 50S ribosomal subunit, although it is not seen to bind rRNA by itself. It is important during the early stages of 50S assembly. The chain is Large ribosomal subunit protein uL13 from Citrifermentans bemidjiense (strain ATCC BAA-1014 / DSM 16622 / JCM 12645 / Bem) (Geobacter bemidjiensis).